The sequence spans 358 residues: Cholesterol galactosyltransferase (358 aa).

Belongs to the glycosyltransferase 2 family.

The catalysed reaction is cholesterol + UDP-alpha-D-galactose = cholesteryl 3-beta-D-galactoside + UDP + H(+). The protein operates within glycolipid biosynthesis. In terms of biological role, galactosyltransferase involved in the synthesis of cholesterol glycolipids, which are formed by the use of host-derived cholesterol and have been shown to be immunogenic, and possibly contribute to Lyme disease pathogenesis. Catalyzes the formation of cholesteryl beta-D-galactopyranoside (CGal) from cholesterol and UDP-alpha-D-galactose. Cannot use GDP-mannose. This Borreliella burgdorferi (strain ATCC 35210 / DSM 4680 / CIP 102532 / B31) (Borrelia burgdorferi) protein is Cholesterol galactosyltransferase.